Here is a 329-residue protein sequence, read N- to C-terminus: Porphobilinogen deaminase (329 aa).

S-(dipyrrolylmethanemethyl)cysteine is present on Cys-253.

The protein belongs to the HMBS family. In terms of assembly, monomer. Requires dipyrromethane as cofactor.

It catalyses the reaction 4 porphobilinogen + H2O = hydroxymethylbilane + 4 NH4(+). Tetrapolymerization of the monopyrrole PBG into the hydroxymethylbilane pre-uroporphyrinogen in several discrete steps. This chain is Porphobilinogen deaminase, found in Leifsonia xyli subsp. xyli (strain CTCB07).